The sequence spans 1143 residues: Condensin-2 complex subunit G2 (1143 aa).

Serine 30 is modified (phosphoserine). The HEAT repeat unit spans residues 460 to 498 (LLPALRYSLHDNSEKVRVAFVDMLLKIKAVRAAKFWKIC). Threonine 805 and threonine 1119 each carry phosphothreonine.

As to quaternary structure, component of the condensin-2 complex, which contains the SMC2 and SMC4 heterodimer, and 3 non SMC subunits that probably regulate the complex: NCAPH2, NCAPD3 and NCAPG2.

The protein localises to the nucleus. Regulatory subunit of the condensin-2 complex, a complex which establishes mitotic chromosome architecture and is involved in physical rigidity of the chromatid axis. This Homo sapiens (Human) protein is Condensin-2 complex subunit G2 (NCAPG2).